The chain runs to 463 residues: Cysteine--tRNA ligase (463 aa).

Cysteine 27 lines the Zn(2+) pocket. The short motif at 29-39 (ATVQGLPHIGH) is the 'HIGH' region element. Cysteine 205, histidine 230, and glutamate 234 together coordinate Zn(2+). The 'KMSKS' region signature appears at 261 to 265 (KMSKS). Lysine 264 is an ATP binding site.

The protein belongs to the class-I aminoacyl-tRNA synthetase family. In terms of assembly, monomer. The cofactor is Zn(2+).

It is found in the cytoplasm. The enzyme catalyses tRNA(Cys) + L-cysteine + ATP = L-cysteinyl-tRNA(Cys) + AMP + diphosphate. In Mycolicibacterium vanbaalenii (strain DSM 7251 / JCM 13017 / BCRC 16820 / KCTC 9966 / NRRL B-24157 / PYR-1) (Mycobacterium vanbaalenii), this protein is Cysteine--tRNA ligase.